The sequence spans 270 residues: uncharacterized protein (270 aa).

It belongs to the GSP E family.

This is an uncharacterized protein from Methanocaldococcus jannaschii (strain ATCC 43067 / DSM 2661 / JAL-1 / JCM 10045 / NBRC 100440) (Methanococcus jannaschii).